The sequence spans 149 residues: UPF0260 protein Psyr_1567 (149 aa).

Belongs to the UPF0260 family.

The protein is UPF0260 protein Psyr_1567 of Pseudomonas syringae pv. syringae (strain B728a).